The sequence spans 529 residues: Serine hydroxymethyltransferase 3, chloroplastic (529 aa).

The N-terminal 60 residues, 1-60, are a transit peptide targeting the chloroplast; that stretch reads MQACCGGNSMASLQQPGRVQGSVFPPIMPPVTKFSQQLKFNISKPFRSSFLKRNLVSEMR. K314 is modified (N6-(pyridoxal phosphate)lysine).

Belongs to the SHMT family. In terms of assembly, homotetramer. Requires pyridoxal 5'-phosphate as cofactor.

The protein localises to the plastid. Its subcellular location is the chloroplast. The catalysed reaction is (6R)-5,10-methylene-5,6,7,8-tetrahydrofolate + glycine + H2O = (6S)-5,6,7,8-tetrahydrofolate + L-serine. Its pathway is one-carbon metabolism; tetrahydrofolate interconversion. Its activity is regulated as follows. Inhibited by 5-CH3-H4PteGlu1/5 and 5-HCO-H4PteGlu1/5 in vitro. Functionally, catalyzes the interconversion of serine and glycine and directs the hydroxymethyl moiety of serine into the metabolic network of H4PteGlu(n)-bound one-carbon units. This chain is Serine hydroxymethyltransferase 3, chloroplastic, found in Arabidopsis thaliana (Mouse-ear cress).